A 220-amino-acid chain; its full sequence is uncharacterized protein (220 aa).

Positions 1–25 (MSCGTYKRGSLTFLLVVALAVPVFC) are cleaved as a signal peptide.

Nacreous layer of shell (at protein level). Expressed primarily in the mantle with highest level in the mantle pallium and lower level in the mantle edge.

Its subcellular location is the secreted. This is an uncharacterized protein from Margaritifera margaritifera (Freshwater pearl mussel).